The primary structure comprises 415 residues: Multidrug resistance protein MdtA (415 aa).

A signal peptide spans 1 to 21 (MKGSYKSRWVIVIVVVIAAIA). Polar residues predominate over residues 31-46 (DSQSAAPGATKQAQQS). Disordered stretches follow at residues 31-56 (DSQS…GMRA) and 392-415 (EAQS…GARS). Positions 399-415 (PEEKATSREYAKKGARS) are enriched in basic and acidic residues.

Belongs to the membrane fusion protein (MFP) (TC 8.A.1) family. As to quaternary structure, part of a tripartite efflux system composed of MdtA, MdtB and MdtC.

It is found in the cell inner membrane. In terms of biological role, the MdtABC tripartite complex confers resistance against novobiocin and deoxycholate. The sequence is that of Multidrug resistance protein MdtA from Escherichia coli O6:K15:H31 (strain 536 / UPEC).